The following is a 578-amino-acid chain: MIQGVIQKIAGPAVIAKGMLGARMYDICKVGEEGLVGEIIRLDGDTAFVQVYEDTSGLKVGEPVVSTGLPLAVELGPGMLNGIYDGIQRPLERIREKTGIYITRGVVVHALDREKKWAWTPMVKPGDEVRGGMVLGTVPEFSFTHKILVPPDVRGRVKEVKPAGEYTVEEPVVVLEDGTELKMYHTWPVRRARPVQRKLDPNTPFLTGMRILDVLFPVAMGGTAAIPGPFGSGKTVTQQSLAKWSNADVVVYVGCGERGNEMTDVLVEFPELTDPKTGGPLMHRTVLIANTSNMPVAAREASIYVGVTIAEYFRDQGFSVALMADSTSRWAEALREISSRLEEMPAEEGYPPYLAARLAAFYERAGKVITLGGEEGAVTIVGAVSPPGGDMSEPVTQSTLRIVGAFWRLDASLAFRRHFPAINWNGSYSLFTSALDPWYRENVAEDYPELRDAISELLQREAGLQEIVQLVGPDALQDAERLVIEVGRIIREDFLQQNAFHEVDAYCSMRKAYGIMKMILAFYKEAEAAIKRGVSIDEILQLPVVERIGRARYVSEEEFPAYFEEAMKEIQGAFKALA.

Residue 228–235 (GPFGSGKT) participates in ATP binding.

The protein belongs to the ATPase alpha/beta chains family.

It catalyses the reaction ATP + H2O + 4 H(+)(in) = ADP + phosphate + 5 H(+)(out). In terms of biological role, produces ATP from ADP in the presence of a proton gradient across the membrane. The V-type alpha chain is a catalytic subunit. The polypeptide is V-type ATP synthase alpha chain (Thermus thermophilus (strain ATCC BAA-163 / DSM 7039 / HB27)).